A 139-amino-acid polypeptide reads, in one-letter code: Proline-rich protein 13 (139 aa).

Residues 1-139 (MWNPSAGPNP…SSSSSSSDSD (139 aa)) form a disordered region. Composition is skewed to pro residues over residues 24 to 62 (ACPPSQNPAFPPGPCPPGIPQGNPAFPPCRPPYPVPQPG) and 70 to 91 (GPYPPPYPPAAPGMCPVNPPAP). Basic residues predominate over residues 103–124 (KTRKKMKKAHKKSHKHHKHGKH). Over residues 125 to 139 (SSSSSSSSSSSSDSD) the composition is skewed to low complexity.

It localises to the nucleus. In terms of biological role, negatively regulates TSP1 expression at the level of transcription. This down-regulation was shown to reduce taxane-induced apoptosis. The sequence is that of Proline-rich protein 13 (Prr13) from Rattus norvegicus (Rat).